A 280-amino-acid polypeptide reads, in one-letter code: Probable endonuclease 4 (280 aa).

Zn(2+) contacts are provided by histidine 69, histidine 109, glutamate 145, aspartate 179, histidine 182, histidine 216, aspartate 229, histidine 231, and glutamate 261.

Belongs to the AP endonuclease 2 family. Requires Zn(2+) as cofactor.

It carries out the reaction Endonucleolytic cleavage to 5'-phosphooligonucleotide end-products.. Endonuclease IV plays a role in DNA repair. It cleaves phosphodiester bonds at apurinic or apyrimidinic (AP) sites, generating a 3'-hydroxyl group and a 5'-terminal sugar phosphate. The protein is Probable endonuclease 4 of Actinobacillus pleuropneumoniae serotype 5b (strain L20).